We begin with the raw amino-acid sequence, 427 residues long: Tyrosine--tRNA ligase (427 aa).

Tyrosine 39 provides a ligand contact to L-tyrosine. Positions 44–53 match the 'HIGH' region motif; sequence PTSDSLHIGH. Residues tyrosine 178 and glutamine 182 each coordinate L-tyrosine. Residues 238-242 carry the 'KMSKS' region motif; sequence KFGKT. Lysine 241 contributes to the ATP binding site. The S4 RNA-binding domain maps to 360 to 417; that stretch reads ITLQQALVESKLVVSRAQARELISSNSITVNSKKQLKTEYIFCATDRLYNRFTLLRRG.

This sequence belongs to the class-I aminoacyl-tRNA synthetase family. TyrS type 1 subfamily. As to quaternary structure, homodimer.

Its subcellular location is the cytoplasm. The catalysed reaction is tRNA(Tyr) + L-tyrosine + ATP = L-tyrosyl-tRNA(Tyr) + AMP + diphosphate + H(+). Catalyzes the attachment of tyrosine to tRNA(Tyr) in a two-step reaction: tyrosine is first activated by ATP to form Tyr-AMP and then transferred to the acceptor end of tRNA(Tyr). This Blochmanniella pennsylvanica (strain BPEN) protein is Tyrosine--tRNA ligase.